We begin with the raw amino-acid sequence, 3013 residues long: DmX-like protein 1 (3013 aa).

3 WD repeats span residues 108 to 145, 164 to 204, and 227 to 275; these read FLDS…TEDE, KTAS…RPAV, and AHPR…NDCF. Serine 322, serine 420, serine 423, and serine 434 each carry phosphoserine. Residues 418 to 442 are disordered; the sequence is PSSEASVEDSIQADLKSDEELDDGV. The WD 4 repeat unit spans residues 474–514; the sequence is DHQIEVLLSEWSKNADMLFSIHPMDGSLLVWHVDWLDEYQP. Residue serine 572 is modified to Phosphoserine. WD repeat units lie at residues 578–619 and 842–893; these read AHSK…ESAF and KKRL…TPVS. A phosphoserine mark is found at serine 916 and serine 922. 3 WD repeats span residues 970–1008, 1145–1193, and 1208–1248; these read HLSS…GESA, EDGS…PLSK, and GAPP…EPVI. A phosphoserine mark is found at serine 1829, serine 1896, serine 1903, and serine 1965. 2 disordered regions span residues 2364-2406 and 2431-2462; these read GQAN…PPAV and QSRA…GLQL. A compositionally biased stretch (low complexity) spans 2385–2398; it reads SKVSARESPVSSSS. Residues 2437–2455 are compositionally biased toward acidic residues; it reads DSEESLESDDEEEEDDDDA. WD repeat units follow at residues 2728–2769, 2771–2810, 2822–2864, 2870–2909, 2912–2951, and 2964–3002; these read KAIN…TCFR, GGNS…CPVT, CHNK…ANSL, CHDS…QRQL, SHDS…LLHT, and NIGT…SPLN.

The chain is DmX-like protein 1 (Dmxl1) from Mus musculus (Mouse).